A 296-amino-acid polypeptide reads, in one-letter code: Small ribosomal subunit protein uS2m (296 aa).

A disordered region spans residues 274 to 296 (QGQKEPGDQGPAHPPGADMSHSL).

The protein belongs to the universal ribosomal protein uS2 family. Component of the mitochondrial small ribosomal subunit (mt-SSU). Mature mammalian 55S mitochondrial ribosomes consist of a small (28S) and a large (39S) subunit. The 28S small subunit contains a 12S ribosomal RNA (12S mt-rRNA) and 30 different proteins. The 39S large subunit contains a 16S rRNA (16S mt-rRNA), a copy of mitochondrial valine transfer RNA (mt-tRNA(Val)), which plays an integral structural role, and 52 different proteins.

The protein resides in the mitochondrion. Functionally, required for mitoribosome formation and stability, and mitochondrial translation. The chain is Small ribosomal subunit protein uS2m (MRPS2) from Homo sapiens (Human).